Reading from the N-terminus, the 136-residue chain is Large ribosomal subunit protein uL16 (136 aa).

It belongs to the universal ribosomal protein uL16 family. As to quaternary structure, part of the 50S ribosomal subunit.

Its function is as follows. Binds 23S rRNA and is also seen to make contacts with the A and possibly P site tRNAs. This is Large ribosomal subunit protein uL16 from Rickettsia felis (strain ATCC VR-1525 / URRWXCal2) (Rickettsia azadi).